The sequence spans 1500 residues: Myosin-8 (1500 aa).

In terms of domain architecture, Myosin N-terminal SH3-like spans 8–57 (AVGSHVWVEDPDEAWLDGEVVEINGDQIKVLCASGKQVVVKDSNIYPKDV). The region spanning 62 to 732 (SGVEDMTRLA…QMADLDTRRT (671 aa)) is the Myosin motor domain. ATP contacts are provided by residues 156–163 (GESGAGKT) and 210–218 (NNNSSRFGK). Actin-binding regions lie at residues 496–530 (LIEK…YQTY), 532–555 (NHKR…AGDV), 590–613 (FPPV…KQQL), and 613–635 (LVSL…KPNN). 6 IQ domains span residues 735–764 (LGRS…SATQ), 758–787 (LRIS…EAAA), 783–812 (REAA…ATIL), 806–835 (LFSA…TKAA), 831–860 (QTKA…AAIT), and 854–883 (LKKA…AARE). Residues 884–1049 (TGALQEAKNK…TEKQIMLQQT (166 aa)) are a coiled coil. In terms of domain architecture, Dilute spans 1146–1447 (DRLIEMIGSA…ISSMRALMTE (302 aa)).

This sequence belongs to the TRAFAC class myosin-kinesin ATPase superfamily. Myosin family. Plant myosin class XI subfamily. As to quaternary structure, homodimer.

The protein localises to the cytoplasm. Its function is as follows. Myosin heavy chain that is required for the cell cycle-regulated transport of various organelles and proteins for their segregation. Functions by binding with its tail domain to receptor proteins on organelles and exerting force with its N-terminal motor domain against actin filaments, thereby transporting its cargo along polarized actin cables. In Arabidopsis thaliana (Mouse-ear cress), this protein is Myosin-8 (XI-B).